Here is a 625-residue protein sequence, read N- to C-terminus: Dopamine beta-hydroxylase (625 aa).

The Cytoplasmic segment spans residues 1–9 (MQVPSPSAR). A helical; Signal-anchor for type II membrane protein membrane pass occupies residues 10 to 30 (EAASMYGTAVAVFLVLLVAVL). The Intragranular segment spans residues 31-625 (QGLAPPESPL…TVVNIGGGKV (595 aa)). The DOMON domain maps to 50-166 (GDLELSWDVS…GTVHLVYGVL (117 aa)). Disulfide bonds link C147–C604, C224–C275, C261–C287, C382–C495, C386–C573, and C458–C480. N-linked (GlcNAc...) asparagine glycosylation is present at N177. Y222 is an active-site residue. Residues H254 and H255 each contribute to the Cu(2+) site. N315 is a glycosylation site (N-linked (GlcNAc...) asparagine). Cu(2+) is bound by residues H325, H404, H406, and M479. Residue H404 is part of the active site. N574 carries an N-linked (GlcNAc...) asparagine glycan.

The protein belongs to the copper type II ascorbate-dependent monooxygenase family. In terms of assembly, homotetramer; composed of two disulfide-linked dimers. It depends on Cu(2+) as a cofactor. Post-translationally, proteolytic cleavage after the membrane-anchor leads to the release of the soluble form. N-glycosylated.

Its subcellular location is the cytoplasmic vesicle. The protein resides in the secretory vesicle lumen. The protein localises to the secretory vesicle. It is found in the chromaffin granule lumen. It localises to the secreted. Its subcellular location is the secretory vesicle membrane. The protein resides in the chromaffin granule membrane. It carries out the reaction dopamine + 2 L-ascorbate + O2 = (R)-noradrenaline + 2 monodehydro-L-ascorbate radical + H2O. Its pathway is catecholamine biosynthesis; (R)-noradrenaline biosynthesis; (R)-noradrenaline from dopamine: step 1/1. In terms of biological role, catalyzes the hydroxylation of dopamine to noradrenaline (also known as norepinephrine), and is thus vital for regulation of these neurotransmitters. This Canis lupus familiaris (Dog) protein is Dopamine beta-hydroxylase (DBH).